The primary structure comprises 429 residues: 3-phosphoshikimate 1-carboxyvinyltransferase (429 aa).

3-phosphoshikimate is bound by residues Lys-22, Ser-23, and Arg-27. Lys-22 provides a ligand contact to phosphoenolpyruvate. Phosphoenolpyruvate is bound by residues Gly-94 and Arg-122. 3-phosphoshikimate-binding residues include Ser-167, Gln-169, Asp-315, and Lys-342. Gln-169 serves as a coordination point for phosphoenolpyruvate. The active-site Proton acceptor is Asp-315. Residues Arg-346 and Arg-388 each contribute to the phosphoenolpyruvate site.

It belongs to the EPSP synthase family. Monomer.

Its subcellular location is the cytoplasm. It catalyses the reaction 3-phosphoshikimate + phosphoenolpyruvate = 5-O-(1-carboxyvinyl)-3-phosphoshikimate + phosphate. The protein operates within metabolic intermediate biosynthesis; chorismate biosynthesis; chorismate from D-erythrose 4-phosphate and phosphoenolpyruvate: step 6/7. In terms of biological role, catalyzes the transfer of the enolpyruvyl moiety of phosphoenolpyruvate (PEP) to the 5-hydroxyl of shikimate-3-phosphate (S3P) to produce enolpyruvyl shikimate-3-phosphate and inorganic phosphate. The chain is 3-phosphoshikimate 1-carboxyvinyltransferase from Geobacter sp. (strain M21).